The sequence spans 496 residues: Apolipoprotein N-acyltransferase (496 aa).

6 consecutive transmembrane segments (helical) span residues 6 to 26 (IICFLLGILSGLVFAPTFFIP), 50 to 70 (FGYLFGFGHFLSGMYWISIGV), 77 to 97 (FWWAIPFALFGLPIILAFFIS), 114 to 134 (LIFCLLWVLFEWIRSWICTGL), 148 to 168 (ILIQPLSITGIYGLSFIVIYI), and 183 to 203 (LKILLASSMLILTVMVIYGAM). Positions 220–464 (VQPSIPQTAK…QGLIPQKLTT (245 aa)) constitute a CN hydrolase domain. Glu-259 (proton acceptor) is an active-site residue. Residue Lys-322 is part of the active site. Residue Cys-372 is the Nucleophile of the active site. The chain crosses the membrane as a helical span at residues 474-494 (FAMLLPIVFILLIHYLLSLIF).

The protein belongs to the CN hydrolase family. Apolipoprotein N-acyltransferase subfamily.

It is found in the cell inner membrane. It catalyses the reaction N-terminal S-1,2-diacyl-sn-glyceryl-L-cysteinyl-[lipoprotein] + a glycerophospholipid = N-acyl-S-1,2-diacyl-sn-glyceryl-L-cysteinyl-[lipoprotein] + a 2-acyl-sn-glycero-3-phospholipid + H(+). Its pathway is protein modification; lipoprotein biosynthesis (N-acyl transfer). Its function is as follows. Catalyzes the phospholipid dependent N-acylation of the N-terminal cysteine of apolipoprotein, the last step in lipoprotein maturation. In Rickettsia typhi (strain ATCC VR-144 / Wilmington), this protein is Apolipoprotein N-acyltransferase.